The primary structure comprises 417 residues: NADH-dependent phenylglyoxylate dehydrogenase subunit alpha (417 aa).

In terms of assembly, dimer of heteropentamers composed of an alpha (PadG), a beta (PadI), a gamma (PadE), a delta (PadF) and an epsilon (PadH) subunit.

The enzyme catalyses phenylglyoxylate + NAD(+) + CoA = benzoyl-CoA + CO2 + NADH. With respect to regulation, activated by magnesium ions and thiamine diphosphate. Involved in the anaerobic metabolism of phenylalanine and phenylacetate. Catalyzes the oxidative decarboxylation of phenylglyoxylate to benzoyl-CoA and CO(2). It can also react slowly with 2-oxo-3-methylbutanoate and use different electron acceptors such as benzyl viologen, methyl viologen, FAD or FMN, but NAD seems to be the physiological electron acceptor. Also catalyzes an isotope exchange between CO(2) and the carboxyl group which proves partial or complete reversibility of the oxidative decarboxylation reaction. This Aromatoleum evansii (Azoarcus evansii) protein is NADH-dependent phenylglyoxylate dehydrogenase subunit alpha (padG).